Reading from the N-terminus, the 760-residue chain is Pentatricopeptide repeat-containing protein At1g20230 (760 aa).

PPR repeat units follow at residues 49–79 (DGYI…IPDP), 80–114 (TIYS…GLIP), 115–149 (DSHV…GLDM), 150–180 (DAFV…MSDK), 181–215 (DVVT…GIEA), 216–250 (NIVS…GFCP), 251–285 (DQVT…GLLK), 286–316 (DKCV…FEMM), 317–351 (EAGV…TMEL), 352–386 (NVVS…GVKP), 387–421 (NHVT…HLLD), 422–452 (NVHV…MPTK), 453–487 (NLVC…RLKP), 488–523 (DFIS…GIKP), and 524–554 (RLEH…MPFE). The type E motif stretch occupies residues 559–634 (VWGALLNSCR…NPGCSWIQVK (76 aa)). Residues 635-665 (NRVYTLLAGDKSHPQIDQITEKMDEISKEMR) form a type E(+) motif region. Residues 666–760 (KSGHRPNLDF…DGICSCGDFW (95 aa)) are type DYW motif.

Belongs to the PPR family. PCMP-H subfamily.

The protein is Pentatricopeptide repeat-containing protein At1g20230 (PCMP-H21) of Arabidopsis thaliana (Mouse-ear cress).